Consider the following 272-residue polypeptide: Energy-coupling factor transporter ATP-binding protein EcfA1 (272 aa).

Positions 5–239 (IKIDNLKYSY…RKALHENGLE (235 aa)) constitute an ABC transporter domain. 37–44 (GHNGSGKS) serves as a coordination point for ATP. Glu163 acts as the Proton acceptor in catalysis.

This sequence belongs to the ABC transporter superfamily. Energy-coupling factor EcfA family. As to quaternary structure, forms a stable energy-coupling factor (ECF) transporter complex probably composed of 2 membrane-embedded substrate-binding proteins (S component), 2 ATP-binding proteins (A component) and 2 transmembrane proteins (T component). This complex interacts with a number of substrate-specific components, including FolT, PanT and RibU for 5-formyltetrahydrofolate, pantothenate and riboflavin respectively.

Its subcellular location is the cell membrane. Functionally, ATP-binding (A) component of a common energy-coupling factor (ECF) ABC-transporter complex. Unlike classic ABC transporters this ECF transporter provides the energy necessary to transport a number of different substrates including 5-formyltetrahydrofolate, pantothenate and riboflavin. Expression of the complex plus FolT in E.coli allows 5-formyltetrahydrofolate uptake; 5-formyltetrahydrofolate is not taken up in the absence of FolT or the EcfA1A2T complex. This is Energy-coupling factor transporter ATP-binding protein EcfA1 from Leuconostoc mesenteroides subsp. mesenteroides (strain ATCC 8293 / DSM 20343 / BCRC 11652 / CCM 1803 / JCM 6124 / NCDO 523 / NBRC 100496 / NCIMB 8023 / NCTC 12954 / NRRL B-1118 / 37Y).